The chain runs to 238 residues: Fatty acid metabolism regulator protein (238 aa).

An HTH gntR-type domain is found at K6–F74. The segment at residues E34 to Q53 is a DNA-binding region (H-T-H motif).

As to quaternary structure, homodimer.

It is found in the cytoplasm. Multifunctional regulator of fatty acid metabolism. The polypeptide is Fatty acid metabolism regulator protein (Shewanella baltica (strain OS155 / ATCC BAA-1091)).